Here is a 218-residue protein sequence, read N- to C-terminus: uncharacterized protein (218 aa).

The segment at 154-199 (CFICTMEYSRTDKNLHPIILNCGHNLCRSCINKLTGNGIVKCPFDR) adopts an RING-type zinc-finger fold.

This is an uncharacterized protein from Caenorhabditis elegans.